The primary structure comprises 660 residues: Acetyl-coenzyme A synthetase (660 aa).

Residues 197–200 (RGGK) and Thr-317 each bind CoA. Residues 397 to 399 (GEP), 421 to 426 (DTFWQT), Asp-512, and Arg-528 each bind ATP. Ser-536 contributes to the CoA binding site. ATP is bound at residue Arg-539. 2 residues coordinate Mg(2+): Val-550 and Val-555. Lys-625 carries the N6-acetyllysine modification.

Belongs to the ATP-dependent AMP-binding enzyme family. Mg(2+) serves as cofactor. Post-translationally, acetylated. Deacetylation by the SIR2-homolog deacetylase activates the enzyme.

It catalyses the reaction acetate + ATP + CoA = acetyl-CoA + AMP + diphosphate. In terms of biological role, catalyzes the conversion of acetate into acetyl-CoA (AcCoA), an essential intermediate at the junction of anabolic and catabolic pathways. AcsA undergoes a two-step reaction. In the first half reaction, AcsA combines acetate with ATP to form acetyl-adenylate (AcAMP) intermediate. In the second half reaction, it can then transfer the acetyl group from AcAMP to the sulfhydryl group of CoA, forming the product AcCoA. The sequence is that of Acetyl-coenzyme A synthetase from Herminiimonas arsenicoxydans.